Reading from the N-terminus, the 76-residue chain is uncharacterized protein (76 aa).

Residues 1–28 form a disordered region; it reads MSTEKLEASEEPQAPLANTSETNSIKGD. Over residues 16–26 the composition is skewed to polar residues; it reads LANTSETNSIK.

The protein localises to the cytoplasm. The protein resides in the bud. It localises to the bud neck. This is an uncharacterized protein from Saccharomyces cerevisiae (strain ATCC 204508 / S288c) (Baker's yeast).